Here is a 472-residue protein sequence, read N- to C-terminus: RNA pseudouridine synthase 6, chloroplastic (472 aa).

The N-terminal 66 residues, 1 to 66 (MASPALTGGY…TDSQNQTTLS (66 aa)), are a transit peptide targeting the chloroplast. The 108-residue stretch at 101 to 208 (VLVSEFISKQ…SPRCYEIDWK (108 aa)) folds into the S4 RNA-binding domain. Residue aspartate 261 is part of the active site.

The protein belongs to the pseudouridine synthase RluA family.

The protein localises to the plastid. It localises to the chloroplast. It catalyses the reaction a uridine in RNA = a pseudouridine in RNA. This is RNA pseudouridine synthase 6, chloroplastic from Arabidopsis thaliana (Mouse-ear cress).